The chain runs to 48 residues: Fimbrial assembly protein, serogroup A1 (48 aa).

In Dichelobacter nodosus (Bacteroides nodosus), this protein is Fimbrial assembly protein, serogroup A1 (fimB).